A 145-amino-acid polypeptide reads, in one-letter code: UPF0763 protein CFF8240_1572 (145 aa).

It belongs to the UPF0763 family.

This chain is UPF0763 protein CFF8240_1572, found in Campylobacter fetus subsp. fetus (strain 82-40).